Here is a 309-residue protein sequence, read N- to C-terminus: Taste receptor type 2 member 64 (309 aa).

Over 1–3 the chain is Extracellular; it reads MVY. A helical membrane pass occupies residues 4 to 26; the sequence is FLLIILSILVVFAFVLGNFSNGF. Residues 27–46 are Cytoplasmic-facing; sequence VALVNVIDWVKTRKISSADQ. A helical membrane pass occupies residues 47 to 69; the sequence is ILTALVVSRIGLLWVILFHWYAN. Residues 70–83 are Extracellular-facing; sequence VFNSALYSSEVGAV. Residues 84 to 106 form a helical membrane-spanning segment; the sequence is ASNISAIINHFSIWLAASLGIFY. Topologically, residues 107–126 are cytoplasmic; the sequence is LLKIANFSNLIFLHLKKRIR. A helical membrane pass occupies residues 127 to 149; the sequence is SVVLVILLGPLVFLICNLAVITM. Residues 150 to 176 lie on the Extracellular side of the membrane; it reads DERVWTKEYEGNVTWKIKLRNAIHLSD. Asparagine 161 carries N-linked (GlcNAc...) asparagine glycosylation. The helical transmembrane segment at 177–199 threads the bilayer; it reads LTVSTLANLIPFILTLICFLLLI. Over 200–230 the chain is Cytoplasmic; it reads CSLHKHLKKMQLHGKGSQDLSTKVHIKALQT. A helical membrane pass occupies residues 231–253; that stretch reads VISFLMLYAIYFLYLITLTWNLW. Residues 254–258 are Extracellular-facing; that stretch reads TQQNK. Residues 259–281 traverse the membrane as a helical segment; it reads LVFLLCQTLGIMYPSFHSFFLIM. The Cytoplasmic portion of the chain corresponds to 282 to 309; the sequence is GSRKLKQTFLSVLCQVTCLVKGQQPSTP.

This sequence belongs to the G-protein coupled receptor T2R family.

Its subcellular location is the membrane. Its function is as follows. Receptor that may play a role in the perception of bitterness and is gustducin-linked. May play a role in sensing the chemical composition of the gastrointestinal content. The activity of this receptor may stimulate alpha gustducin, mediate PLC-beta-2 activation and lead to the gating of TRPM5. In Pan paniscus (Pygmy chimpanzee), this protein is Taste receptor type 2 member 64 (TAS2R64).